Here is a 292-residue protein sequence, read N- to C-terminus: RNA 5'-monophosphate methyltransferase (292 aa).

A disordered region spans residues 1–21; that stretch reads MAVPTELDGGSVKETAAEEES. S-adenosyl-L-methionine-binding positions include R46, N76, D110, 135–136, and M164; that span reads DF. One can recognise a Bin3-type SAM domain in the interval 53-274; the sequence is ELLRQLFPES…KQTIETHPIP (222 aa).

This sequence belongs to the methyltransferase superfamily. Interacts with DICER1; the interaction may be mediated by RNA.

The protein localises to the cytoplasm. The catalysed reaction is a 5'-end 5'-phospho-ribonucleoside-RNA + S-adenosyl-L-methionine = a 5'-end (5'-methylphospho)-ribonucleoside-RNA + S-adenosyl-L-homocysteine. It carries out the reaction a 5'-end 5'-phospho-ribonucleoside-RNA + 2 S-adenosyl-L-methionine = a 5'-end (5'-bismethylphospho)-ribonucleoside-RNA + 2 S-adenosyl-L-homocysteine. Functionally, O-methyltransferase that specifically monomethylates 5'-monophosphate of cytoplasmic histidyl tRNA (tRNA(His)), acting as a capping enzyme by protecting tRNA(His) from cleavage by DICER1. Also able, with less efficiently, to methylate the 5' monophosphate of a subset of pre-miRNAs, acting as a negative regulator of miRNA processing. The 5' monophosphate of pre-miRNAs is recognized by DICER1 and is required for pre-miRNAs processing: methylation at this position reduces the processing of pre-miRNAs by DICER1. Was also reported to mediate dimethylation of pre-miR-145; however dimethylation cannot be reproduced by another group which observes a monomethylation of pre-miR-145. In Homo sapiens (Human), this protein is RNA 5'-monophosphate methyltransferase.